A 226-amino-acid chain; its full sequence is 7-cyano-7-deazaguanine synthase (226 aa).

8–18 is a binding site for ATP; that stretch reads ISGGLDSTTCL. Cys-188, Cys-198, Cys-201, and Cys-204 together coordinate Zn(2+).

This sequence belongs to the QueC family. The cofactor is Zn(2+).

The enzyme catalyses 7-carboxy-7-deazaguanine + NH4(+) + ATP = 7-cyano-7-deazaguanine + ADP + phosphate + H2O + H(+). Its pathway is purine metabolism; 7-cyano-7-deazaguanine biosynthesis. Its function is as follows. Catalyzes the ATP-dependent conversion of 7-carboxy-7-deazaguanine (CDG) to 7-cyano-7-deazaguanine (preQ(0)). This is 7-cyano-7-deazaguanine synthase from Coxiella burnetii (strain RSA 331 / Henzerling II).